The following is a 501-amino-acid chain: UDP-N-acetylmuramate--L-alanine ligase (501 aa).

An ATP-binding site is contributed by 130–136 (GTHGKTS).

Belongs to the MurCDEF family.

The protein resides in the cytoplasm. The catalysed reaction is UDP-N-acetyl-alpha-D-muramate + L-alanine + ATP = UDP-N-acetyl-alpha-D-muramoyl-L-alanine + ADP + phosphate + H(+). It functions in the pathway cell wall biogenesis; peptidoglycan biosynthesis. In terms of biological role, cell wall formation. The sequence is that of UDP-N-acetylmuramate--L-alanine ligase from Nocardia farcinica (strain IFM 10152).